The sequence spans 265 residues: MESRLFNTPAKKAFGQHFLVDRYYIDRIIHAINPQPNDHIVEIGPGQGAITLPLLKCCGSLTAIELDRDLIAPLTAAATPIGKLDIIHRDVLTVDLSILAKQGNKKLRLVGNLPYNISSPILFHVLQQAAIIADMHFMLQKEVVDRMAAPPGSKVYGRLSVMLQAWCEVTTMFVVPPDAFQPPPKVNSAITRLVPRDPTTIRIADTKRFSDIVRAAFGQRRKTLRNSLADICTPAHFEHAGIRTNARAEQLEVTEFIALANAKNT.

Residues His-17, Leu-19, Gly-44, Glu-65, Asp-90, and Asn-112 each contribute to the S-adenosyl-L-methionine site.

The protein belongs to the class I-like SAM-binding methyltransferase superfamily. rRNA adenine N(6)-methyltransferase family. RsmA subfamily.

It is found in the cytoplasm. It catalyses the reaction adenosine(1518)/adenosine(1519) in 16S rRNA + 4 S-adenosyl-L-methionine = N(6)-dimethyladenosine(1518)/N(6)-dimethyladenosine(1519) in 16S rRNA + 4 S-adenosyl-L-homocysteine + 4 H(+). Its function is as follows. Specifically dimethylates two adjacent adenosines (A1518 and A1519) in the loop of a conserved hairpin near the 3'-end of 16S rRNA in the 30S particle. May play a critical role in biogenesis of 30S subunits. This is Ribosomal RNA small subunit methyltransferase A from Xylella fastidiosa (strain Temecula1 / ATCC 700964).